We begin with the raw amino-acid sequence, 321 residues long: Lipoyl synthase (321 aa).

7 residues coordinate [4Fe-4S] cluster: cysteine 68, cysteine 73, cysteine 79, cysteine 94, cysteine 98, cysteine 101, and serine 308. Residues 80–297 (FNHGTATFMI…KEIALELGFT (218 aa)) form the Radical SAM core domain.

It belongs to the radical SAM superfamily. Lipoyl synthase family. [4Fe-4S] cluster serves as cofactor.

Its subcellular location is the cytoplasm. The enzyme catalyses [[Fe-S] cluster scaffold protein carrying a second [4Fe-4S](2+) cluster] + N(6)-octanoyl-L-lysyl-[protein] + 2 oxidized [2Fe-2S]-[ferredoxin] + 2 S-adenosyl-L-methionine + 4 H(+) = [[Fe-S] cluster scaffold protein] + N(6)-[(R)-dihydrolipoyl]-L-lysyl-[protein] + 4 Fe(3+) + 2 hydrogen sulfide + 2 5'-deoxyadenosine + 2 L-methionine + 2 reduced [2Fe-2S]-[ferredoxin]. The protein operates within protein modification; protein lipoylation via endogenous pathway; protein N(6)-(lipoyl)lysine from octanoyl-[acyl-carrier-protein]: step 2/2. In terms of biological role, catalyzes the radical-mediated insertion of two sulfur atoms into the C-6 and C-8 positions of the octanoyl moiety bound to the lipoyl domains of lipoate-dependent enzymes, thereby converting the octanoylated domains into lipoylated derivatives. The polypeptide is Lipoyl synthase (Aliivibrio fischeri (strain MJ11) (Vibrio fischeri)).